The primary structure comprises 664 residues: UvrABC system protein B (664 aa).

The Helicase ATP-binding domain maps to 23–180 (EGLNRGMRFQ…EKLAKIGYQR (158 aa)). 36–43 (GVTGSGKT) serves as a coordination point for ATP. The Beta-hairpin motif lies at 89–112 (YYDYYQPEAYIPTKDLYIEKNADI). Residues 426–588 (QVDDLINEIV…ITPRSIVKPL (163 aa)) enclose the Helicase C-terminal domain. Residues 622 to 657 (EEYVALLEEEMYRAASELRYEDAAALRDELFRVKET) enclose the UVR domain.

It belongs to the UvrB family. In terms of assembly, forms a heterotetramer with UvrA during the search for lesions. Interacts with UvrC in an incision complex.

It is found in the cytoplasm. The UvrABC repair system catalyzes the recognition and processing of DNA lesions. A damage recognition complex composed of 2 UvrA and 2 UvrB subunits scans DNA for abnormalities. Upon binding of the UvrA(2)B(2) complex to a putative damaged site, the DNA wraps around one UvrB monomer. DNA wrap is dependent on ATP binding by UvrB and probably causes local melting of the DNA helix, facilitating insertion of UvrB beta-hairpin between the DNA strands. Then UvrB probes one DNA strand for the presence of a lesion. If a lesion is found the UvrA subunits dissociate and the UvrB-DNA preincision complex is formed. This complex is subsequently bound by UvrC and the second UvrB is released. If no lesion is found, the DNA wraps around the other UvrB subunit that will check the other stand for damage. The chain is UvrABC system protein B from Thermotoga neapolitana (strain ATCC 49049 / DSM 4359 / NBRC 107923 / NS-E).